A 183-amino-acid chain; its full sequence is MTGNIVSRRYAKALFSVGQKQGEEDLAAYGLALTELSQILEDSPEALRLFQNPVFSADEKKAVLEKLLEKTSAGPVVKNFCSLLADKGRLPVIPEIASDYAGMLDNVQGVVRGKLVTAIKLTVKRQKEIKTRLEEQLKSKLELDFAMDKDILGGVVLQVGDKVLDASIRAQLQMMKEQIKRGV.

This sequence belongs to the ATPase delta chain family. F-type ATPases have 2 components, F(1) - the catalytic core - and F(0) - the membrane proton channel. F(1) has five subunits: alpha(3), beta(3), gamma(1), delta(1), epsilon(1). F(0) has three main subunits: a(1), b(2) and c(10-14). The alpha and beta chains form an alternating ring which encloses part of the gamma chain. F(1) is attached to F(0) by a central stalk formed by the gamma and epsilon chains, while a peripheral stalk is formed by the delta and b chains.

It is found in the cell inner membrane. In terms of biological role, f(1)F(0) ATP synthase produces ATP from ADP in the presence of a proton or sodium gradient. F-type ATPases consist of two structural domains, F(1) containing the extramembraneous catalytic core and F(0) containing the membrane proton channel, linked together by a central stalk and a peripheral stalk. During catalysis, ATP synthesis in the catalytic domain of F(1) is coupled via a rotary mechanism of the central stalk subunits to proton translocation. This protein is part of the stalk that links CF(0) to CF(1). It either transmits conformational changes from CF(0) to CF(1) or is implicated in proton conduction. The chain is ATP synthase subunit delta from Maridesulfovibrio salexigens (strain ATCC 14822 / DSM 2638 / NCIMB 8403 / VKM B-1763) (Desulfovibrio salexigens).